The sequence spans 571 residues: MKQSKILISTVKEVPNDAEVLSHKMMLRAGYIRQISAGMYAYLPLAYKVISKIEKIVREEMEAIDAVEMLTPAVLPAELWKQSGRYETYGQELYKFKNRHDRDFILGPTHEETMTTLIRDEVKSYKKLPLSLYQIQMKYRDEDRPRYGLLRGREFLMKDAYSFHADEETLDQSFRDFEKAYQNIFRRCGLNFREIVGDAGAMGGRDSKEFSAIASIGEDTIAYSEESDYAANLEMASSVYTDLQMHENQEELTKVATDDAHSIDEVAAKLDVDSNRLIKTMVLIVDEAPVLALLRGNDQLNEVKLTNLLHADEVREATEEEAFELLGAHVGSLGPVLENKPENLKIVADKYIEQMVNSVVGANEDGFHLKNVNVERDFTVDEYADIRTVREGELAPDGKGALKFTKGIEIGHIFKIGTKYSEALDAKVLDENGRAIPVIMGCYGIGVSRLLSAVSEQQSDENGLVWPKNIAPYDVHVIPVNAKNAEQMEIADQINGELTKAGYDVLVDDRKERAGVKFADSDLIGIPLRVTIGKKASEGIVEVKLRKTGEAVEVKVAELNNTVEILLNQAQ.

The protein belongs to the class-II aminoacyl-tRNA synthetase family. ProS type 1 subfamily. In terms of assembly, homodimer.

Its subcellular location is the cytoplasm. The catalysed reaction is tRNA(Pro) + L-proline + ATP = L-prolyl-tRNA(Pro) + AMP + diphosphate. Its function is as follows. Catalyzes the attachment of proline to tRNA(Pro) in a two-step reaction: proline is first activated by ATP to form Pro-AMP and then transferred to the acceptor end of tRNA(Pro). As ProRS can inadvertently accommodate and process non-cognate amino acids such as alanine and cysteine, to avoid such errors it has two additional distinct editing activities against alanine. One activity is designated as 'pretransfer' editing and involves the tRNA(Pro)-independent hydrolysis of activated Ala-AMP. The other activity is designated 'posttransfer' editing and involves deacylation of mischarged Ala-tRNA(Pro). The misacylated Cys-tRNA(Pro) is not edited by ProRS. In Pediococcus pentosaceus (strain ATCC 25745 / CCUG 21536 / LMG 10740 / 183-1w), this protein is Proline--tRNA ligase.